Here is a 275-residue protein sequence, read N- to C-terminus: Release factor glutamine methyltransferase (275 aa).

S-adenosyl-L-methionine-binding positions include 117–121 (GTGSG), Asp-140, Trp-168, and Asn-182. Position 182-185 (182-185 (NPPY)) interacts with substrate.

It belongs to the protein N5-glutamine methyltransferase family. PrmC subfamily.

It catalyses the reaction L-glutaminyl-[peptide chain release factor] + S-adenosyl-L-methionine = N(5)-methyl-L-glutaminyl-[peptide chain release factor] + S-adenosyl-L-homocysteine + H(+). Methylates the class 1 translation termination release factors RF1/PrfA and RF2/PrfB on the glutamine residue of the universally conserved GGQ motif. This is Release factor glutamine methyltransferase from Buchnera aphidicola subsp. Schizaphis graminum (strain Sg).